We begin with the raw amino-acid sequence, 298 residues long: Multifunctional dioxygenase ausE (298 aa).

Positions 72 and 127 each coordinate substrate. Residues His130 and Asp132 each coordinate Fe cation. Residue Thr167 participates in substrate binding. His214 lines the Fe cation pocket. Arg226 serves as a coordination point for substrate.

It belongs to the PhyH family. Homodimer. The cofactor is Fe cation.

It carries out the reaction preaustinoid A1 + 2-oxoglutarate + O2 = preaustinoid A2 + succinate + CO2 + H2O. The catalysed reaction is preaustinoid A2 + 2-oxoglutarate + O2 = preaustinoid A3 + succinate + CO2 + H2O. It catalyses the reaction berkeleyone A + 2-oxoglutarate + O2 = preaustinoid A + succinate + CO2 + H2O. It participates in secondary metabolite biosynthesis; terpenoid biosynthesis. Multifunctional dioxygenase; part of the gene cluster B that mediates the biosynthesis of austinol and dehydroaustinol, two fungal meroterpenoids. The first step of the pathway is the synthesis of 3,5-dimethylorsellinic acid by the polyketide synthase ausA. 3,5-dimethylorsellinic acid is then prenylated by the polyprenyl transferase ausN. Further epoxidation by the FAD-dependent monooxygenase ausM and cyclization by the probable terpene cyclase ausL lead to the formation of protoaustinoid A. Protoaustinoid A is then oxidized to spiro-lactone preaustinoid A3 by the combined action of the FAD-binding monooxygenases ausB and ausC, and the dioxygenase ausE. Acid-catalyzed keto-rearrangement and ring contraction of the tetraketide portion of preaustinoid A3 by ausJ lead to the formation of preaustinoid A4. The aldo-keto reductase ausK, with the help of ausH, is involved in the next step by transforming preaustinoid A4 into isoaustinone which is in turn hydroxylated by the P450 monooxygenase ausI to form austinolide. Finally, the cytochrome P450 monooxygenase ausG modifies austinolide to austinol. Austinol can be further modified to dehydroaustinol which forms a diffusible complex with diorcinol that initiates conidiation. Due to genetic rearrangements of the clusters and the subsequent loss of some enzymes, the end products of the Emericella nidulans austinoid biosynthesis clusters are austinol and dehydroaustinol, even if additional enzymes, such as the O-acetyltransferase ausQ and the cytochrome P450 monooxygenase ausR are still functional. This chain is Multifunctional dioxygenase ausE, found in Emericella nidulans (strain FGSC A4 / ATCC 38163 / CBS 112.46 / NRRL 194 / M139) (Aspergillus nidulans).